Consider the following 198-residue polypeptide: Cyclin-dependent kinase inhibitor 1B (198 aa).

Residues 1–11 show a composition bias toward polar residues; it reads MSNVRVSNGSP. The interval 1 to 34 is disordered; the sequence is MSNVRVSNGSPSLERMDARQAEHPKPSACRNLFG. Residue Ser10 is modified to Phosphoserine; by UHMK1. The span at 14–25 shows a compositional bias: basic and acidic residues; it reads ERMDARQAEHPK. Positions 51 to 91 are interaction with CDK2; that stretch reads DMEEASQRKWNFDFQNHNPLEGRYQWQEVDKGSLPEFYYRP. Residue Tyr74 is modified to Phosphotyrosine; by SRC. A disordered region spans residues 85–198; it reads PEFYYRPPRP…KKPGLRRHQT (114 aa). Residue Tyr88 is modified to Phosphotyrosine; by ABL, LYN and SRC. Tyr89 carries the post-translational modification Phosphotyrosine. Polar residues predominate over residues 104–124; sequence QESQDVSGSRQAVPSIGSQAY. A Nuclear localization signal motif is present at residues 153-169; sequence KRPAADDSSSQNKRANR. Thr170 is modified (phosphothreonine). Residues 175 to 186 show a composition bias toward polar residues; it reads SDGSLNAGSVEQ. Phosphothreonine; by PKB/AKT1, CDK1 and CDK2 is present on Thr187. Phosphothreonine; by CaMK1, PKB/AKT1, RPS6KA1, RPS6KA3 and PIM1 is present on Thr198.

The protein belongs to the CDI family. As to quaternary structure, forms a ternary complex composed of CCNE1, CDK2 and CDKN1B. Interacts directly with CCNE1; the interaction is inhibited by CDK2-dependent phosphorylation on Thr-187. Interacts with COPS5, subunit of the COP9 signalosome complex; the interaction leads to CDKN1B degradation. Interacts with NUP50; the interaction leads to nuclear import and degradation of phosphorylated CDKN1B. Interacts with CCND1 and SNX6. Interacts (Thr-198-phosphorylated form) with 14-3-3 proteins, binds strongly YWHAQ, weakly YWHAE and YWHAH, but not YWHAB nor YWHAZ; the interaction with YWHAQ results in translocation to the cytoplasm. Interacts with AKT1 and LYN; the interactions lead to cytoplasmic mislocation, phosphorylation of CDKN1B and inhibition of cell cycle arrest. Forms a ternary complex with CCNA2 and CDK2; CDKN1B inhibits the kinase activity of CDK2 through conformational rearrangements. Interacts (unphosphorylated form) with CDK2. Forms a complex with CDK2 and SPDYA, but does not directly interact with SPDYA. Forms a ternary complex composed of cyclin D, CDK4 and CDKN1B. Interacts (phosphorylated on Tyr-88 and Tyr-89) with CDK4; the interaction is required for cyclin D and CDK4 complex assembly, induces nuclear translocation and activates the CDK4 kinase activity. Interacts with GRB2. Interacts with PIM1. Identified in a complex with SKP1, SKP2 and CKS1B. Interacts with UHMK1; the interaction leads to cytoplasmic mislocation, phosphorylation of CDKN1B and inhibition of cell cycle arrest. Also interacts with CDK1. Dephosphorylated on Thr-187 by PPM1H, leading to CDKN1B stability. Post-translationally, phosphorylated; phosphorylation occurs on serine, threonine and tyrosine residues. Phosphorylation on Ser-10 is the major site of phosphorylation in resting cells, takes place at the G(0)-G(1) phase and leads to protein stability. Phosphorylation on other sites is greatly enhanced by mitogens, growth factors, cMYC and in certain cancer cell lines. The phosphorylated form found in the cytoplasm is inactivate. Phosphorylation on Thr-198 is required for interaction with 14-3-3 proteins. Phosphorylation on Thr-187, by CDK1 and CDK2 leads to protein ubiquitination and proteasomal degradation. Tyrosine phosphorylation promotes this process. Phosphorylation by PKB/AKT1 can be suppressed by LY294002, an inhibitor of the catalytic subunit of PI3K. Phosphorylation on Tyr-88 and Tyr-89 has no effect on binding CDK2, but is required for binding CDK4. Dephosphorylated on tyrosine residues by G-CSF. Dephosphorylated on Thr-187 by PPM1H, leading to CDKN1B stability. Ubiquitinated; in the cytoplasm by the KPC complex (composed of RNF123/KPC1 and UBAC1/KPC2) and, in the nucleus, by SCF(SKP2). The latter requires prior phosphorylation on Thr-187. Ubiquitinated; by a TRIM21-containing SCF(SKP2)-like complex; leads to its degradation. In terms of processing, subject to degradation in the lysosome. Interaction with SNX6 promotes lysosomal degradation.

The protein localises to the nucleus. It is found in the cytoplasm. Its subcellular location is the endosome. Its function is as follows. Important regulator of cell cycle progression. Inhibits the kinase activity of CDK2 bound to cyclin A, but has little inhibitory activity on CDK2 bound to SPDYA. Involved in G1 arrest. Potent inhibitor of cyclin E- and cyclin A-CDK2 complexes. Forms a complex with cyclin type D-CDK4 complexes and is involved in the assembly, stability, and modulation of CCND1-CDK4 complex activation. Acts either as an inhibitor or an activator of cyclin type D-CDK4 complexes depending on its phosphorylation state and/or stoichometry. In Cricetulus griseus (Chinese hamster), this protein is Cyclin-dependent kinase inhibitor 1B (CDKN1B).